Reading from the N-terminus, the 739-residue chain is MPNMEPTTKEIKEQKIYQEMGLTDSEYELVCSILGREPNYTETGLFSVMWSEHCSYKNSKPVLRKFPTEGKQVLQGPGEGAGIVDIGDGLGVAFKVESHNHPSYVEPYQGAATGVGGIIRDVFSMGARPIAMLNSLRFGELDTPHAKYLVSEVVAGIAGYGNSIGIPTVGGEIQFDPCYTKNPLVNAMCVGLIEAKDIQKGQAKGIGNPVMYVGAKTGRDGIHGATFASVEFSEEGEQQRSAVQVGDPFMEKLLLEACLDVIRDHSDILVGIQDMGAAGLVSSSSEMASKAGAGLELIMDDVPQRELNMTPYEMLLSESQERMLLCVKKGHVEEIQALFERYGLEAVVIGQVTDDKMYKIIHHGEVVANVPVDALAEDAPVYHKPSKEPARYQAFQEEESFVPVMEDVVGVWKELLAQPTIASKRHIYEQYDYQVRTDTAVVPGSDAAIVRVRGTEKAIAMTTDCNSRYLYLDPEVGGAIAVAEAARNIVCSGGKPLAITDGLNFGNPEKPEIFWEIEKAADGISAACLELDTPVISGNVSLYNETDGTGIYPTPVIGMVGLVEDLAHITTQDFKNSGDVIFLIGETKAEYSGSELQKLQQGKISGRAPELDLTTEKKYQQLLLTAIQEGLVASSHDLAEGGFGVALAEATFKAGLGADVEVPFELNQLFSESQSRFLVSVKPENEAAFAQLMELEKVYRLGVVTEDDTIRVKHKEDQVTAKTTELRSIWEGAIPCLLK.

The active site involves H53. 2 residues coordinate ATP: Y56 and K95. E97 lines the Mg(2+) pocket. Substrate-binding positions include 98-101 and R120; that span reads SHNH. Catalysis depends on H99, which acts as the Proton acceptor. D121 contributes to the Mg(2+) binding site. Substrate is bound at residue Q244. Mg(2+) is bound at residue D274. A substrate-binding site is contributed by 318–320; the sequence is ESQ. ATP is bound by residues D501 and G538. Mg(2+) is bound at residue N539. Residue S541 coordinates substrate.

It belongs to the FGAMS family. Monomer. Part of the FGAM synthase complex composed of 1 PurL, 1 PurQ and 2 PurS subunits.

It is found in the cytoplasm. The enzyme catalyses N(2)-formyl-N(1)-(5-phospho-beta-D-ribosyl)glycinamide + L-glutamine + ATP + H2O = 2-formamido-N(1)-(5-O-phospho-beta-D-ribosyl)acetamidine + L-glutamate + ADP + phosphate + H(+). Its pathway is purine metabolism; IMP biosynthesis via de novo pathway; 5-amino-1-(5-phospho-D-ribosyl)imidazole from N(2)-formyl-N(1)-(5-phospho-D-ribosyl)glycinamide: step 1/2. Its function is as follows. Part of the phosphoribosylformylglycinamidine synthase complex involved in the purines biosynthetic pathway. Catalyzes the ATP-dependent conversion of formylglycinamide ribonucleotide (FGAR) and glutamine to yield formylglycinamidine ribonucleotide (FGAM) and glutamate. The FGAM synthase complex is composed of three subunits. PurQ produces an ammonia molecule by converting glutamine to glutamate. PurL transfers the ammonia molecule to FGAR to form FGAM in an ATP-dependent manner. PurS interacts with PurQ and PurL and is thought to assist in the transfer of the ammonia molecule from PurQ to PurL. This is Phosphoribosylformylglycinamidine synthase subunit PurL from Listeria monocytogenes serotype 4b (strain CLIP80459).